The sequence spans 335 residues: Large ribosomal subunit protein uL10 (335 aa).

The segment at 300–335 is disordered; it reads QVSEQAAEKKEEKKEEEKKGPSEEEIGGGLSSLFGG. The span at 305-321 shows a compositional bias: basic and acidic residues; that stretch reads AAEKKEEKKEEEKKGPS. The segment covering 326-335 has biased composition (gly residues); it reads GGGLSSLFGG.

The protein belongs to the universal ribosomal protein uL10 family. As to quaternary structure, part of the 50S ribosomal subunit. Forms part of the ribosomal stalk which helps the ribosome interact with GTP-bound translation factors. Forms a heptameric L10(L12)2(L12)2(L12)2 complex, where L10 forms an elongated spine to which the L12 dimers bind in a sequential fashion.

Forms part of the ribosomal stalk, playing a central role in the interaction of the ribosome with GTP-bound translation factors. The protein is Large ribosomal subunit protein uL10 of Sulfolobus acidocaldarius (strain ATCC 33909 / DSM 639 / JCM 8929 / NBRC 15157 / NCIMB 11770).